We begin with the raw amino-acid sequence, 274 residues long: NADH-ubiquinone oxidoreductase chain 2 (274 aa).

A run of 8 helical transmembrane segments spans residues 28 to 48, 54 to 74, 79 to 99, 107 to 127, 128 to 148, 171 to 191, 206 to 226, and 254 to 274; these read MIIM…FWFP, LTWM…LMLI, IKYL…IGGL, LMAF…MFSE, SIWL…TFMF, FTLF…GFLP, FLLT…LRIC, and LIMT…YFMF.

The protein belongs to the complex I subunit 2 family.

It is found in the mitochondrion inner membrane. The catalysed reaction is a ubiquinone + NADH + 5 H(+)(in) = a ubiquinol + NAD(+) + 4 H(+)(out). Functionally, core subunit of the mitochondrial membrane respiratory chain NADH dehydrogenase (Complex I) that is believed to belong to the minimal assembly required for catalysis. Complex I functions in the transfer of electrons from NADH to the respiratory chain. The immediate electron acceptor for the enzyme is believed to be ubiquinone. This is NADH-ubiquinone oxidoreductase chain 2 (mt:ND2) from Drosophila sechellia (Fruit fly).